Here is a 242-residue protein sequence, read N- to C-terminus: Ribosomal RNA small subunit methyltransferase G (242 aa).

Residues G81, F86, 104–106 (DST), 132–133 (AE), and R151 contribute to the S-adenosyl-L-methionine site.

It belongs to the methyltransferase superfamily. RNA methyltransferase RsmG family.

Its subcellular location is the cytoplasm. Functionally, specifically methylates the N7 position of a guanine in 16S rRNA. The sequence is that of Ribosomal RNA small subunit methyltransferase G from Synechococcus elongatus (strain ATCC 33912 / PCC 7942 / FACHB-805) (Anacystis nidulans R2).